A 163-amino-acid chain; its full sequence is Phosphopantetheine adenylyltransferase (163 aa).

Ser-9 contributes to the substrate binding site. Residues 9–10 (SF) and His-17 each bind ATP. Lys-41, Thr-73, and Arg-87 together coordinate substrate. Residues 88–90 (GLR), Glu-98, and 123–129 (YSFISSG) contribute to the ATP site.

It belongs to the bacterial CoaD family. Homohexamer. Mg(2+) is required as a cofactor.

Its subcellular location is the cytoplasm. It catalyses the reaction (R)-4'-phosphopantetheine + ATP + H(+) = 3'-dephospho-CoA + diphosphate. Its pathway is cofactor biosynthesis; coenzyme A biosynthesis; CoA from (R)-pantothenate: step 4/5. Functionally, reversibly transfers an adenylyl group from ATP to 4'-phosphopantetheine, yielding dephospho-CoA (dPCoA) and pyrophosphate. This is Phosphopantetheine adenylyltransferase from Desulforudis audaxviator (strain MP104C).